The chain runs to 345 residues: Probable velvet family sexual development regulator LACBIDRAFT_317102 (345 aa).

Composition is skewed to polar residues over residues 1 to 13 and 24 to 38; these read MFTT…SYRS and EIQN…NPPR. 3 disordered regions span residues 1 to 43, 138 to 189, and 310 to 345; these read MFTT…TRRR, ESWT…SPSS, and RKRR…SDED. In terms of domain architecture, Velvet spans 62 to 306; it reads GQTIRAELDE…ARWGVRLNIR (245 aa). Low complexity-rich tracts occupy residues 141-158 and 167-184; these read TSRS…PTLS and SSPQ…ASTP. Acidic residues predominate over residues 336-345; it reads SEDDEASDED.

It belongs to the velvet family.

It is found in the nucleus. Its function is as follows. Velvet-domain-containing protein that probably acts as a positive regulator of sexual development. In Laccaria bicolor (strain S238N-H82 / ATCC MYA-4686) (Bicoloured deceiver), this protein is Probable velvet family sexual development regulator LACBIDRAFT_317102.